Consider the following 252-residue polypeptide: 3-dehydroquinate dehydratase (252 aa).

Residues Ser-21, 46–48 (EWR), and Arg-82 each bind 3-dehydroquinate. The Proton donor/acceptor role is filled by His-143. Lys-170 serves as the catalytic Schiff-base intermediate with substrate. Arg-213, Ser-232, and Gln-236 together coordinate 3-dehydroquinate.

It belongs to the type-I 3-dehydroquinase family. In terms of assembly, homodimer.

It carries out the reaction 3-dehydroquinate = 3-dehydroshikimate + H2O. The protein operates within metabolic intermediate biosynthesis; chorismate biosynthesis; chorismate from D-erythrose 4-phosphate and phosphoenolpyruvate: step 3/7. In terms of biological role, involved in the third step of the chorismate pathway, which leads to the biosynthesis of aromatic amino acids. Catalyzes the cis-dehydration of 3-dehydroquinate (DHQ) and introduces the first double bond of the aromatic ring to yield 3-dehydroshikimate. The polypeptide is 3-dehydroquinate dehydratase (Escherichia coli (strain 55989 / EAEC)).